A 313-amino-acid chain; its full sequence is Porphobilinogen deaminase (313 aa).

An S-(dipyrrolylmethanemethyl)cysteine modification is found at Cys-242.

This sequence belongs to the HMBS family. As to quaternary structure, monomer. Requires dipyrromethane as cofactor.

It carries out the reaction 4 porphobilinogen + H2O = hydroxymethylbilane + 4 NH4(+). Its pathway is porphyrin-containing compound metabolism; protoporphyrin-IX biosynthesis; coproporphyrinogen-III from 5-aminolevulinate: step 2/4. In terms of biological role, tetrapolymerization of the monopyrrole PBG into the hydroxymethylbilane pre-uroporphyrinogen in several discrete steps. The polypeptide is Porphobilinogen deaminase (Salmonella arizonae (strain ATCC BAA-731 / CDC346-86 / RSK2980)).